Reading from the N-terminus, the 110-residue chain is Protein YcgL (110 aa).

A YcgL domain is found at 14-98; sequence MFCVIYRSSK…PPEDLLKQHL (85 aa). The interval 87–110 is disordered; the sequence is PPPPEDLLKQHLSSVGQNTSSADR. Polar residues predominate over residues 97 to 110; that stretch reads HLSSVGQNTSSADR.

The chain is Protein YcgL from Salmonella newport (strain SL254).